Here is a 277-residue protein sequence, read N- to C-terminus: Histone-lysine N-methyltransferase set-17 (277 aa).

The SET domain occupies Phe-135 to Gly-246. Tyr-245 serves as a coordination point for S-adenosyl-L-methionine.

The protein belongs to the class V-like SAM-binding methyltransferase superfamily. Expressed in the germline. Predominantly expressed in primary spermatocytes. Also expressed in the oocyte-producing germline of hermaphrodites.

The protein resides in the nucleus. It carries out the reaction N(6)-methyl-L-lysyl(4)-[histone H3] + S-adenosyl-L-methionine = N(6),N(6)-dimethyl-L-lysyl(4)-[histone H3] + S-adenosyl-L-homocysteine + H(+). The catalysed reaction is L-lysyl(4)-[histone H3] + S-adenosyl-L-methionine = N(6)-methyl-L-lysyl(4)-[histone H3] + S-adenosyl-L-homocysteine + H(+). Functionally, histone methyltransferase that specifically mono- and di-methylates 'Lys-4' of histone H3 in vitro. Does not tri-methylate 'Lys-4' of histone H3 in vitro. Promotes spermatid development and fertility by positively regulating the transcription of spermatocyte-specific genes in primary spermatocytes. Together with spr-5, required for transgenerational fertility. The chain is Histone-lysine N-methyltransferase set-17 from Caenorhabditis elegans.